The following is a 221-amino-acid chain: Ependymin (221 aa).

The signal sequence occupies residues 1–21 (MQAFAVAALSIWLCLGATTLA). N37, N77, and N101 each carry an N-linked (GlcNAc...) asparagine glycan.

Belongs to the ependymin family. As to quaternary structure, forms disulfide-linked dimers. Post-translationally, binds calcium through the terminal sialic acids. EPDs are synthesized in the meninx and secreted in the cerebrospinal fluid.

The protein resides in the secreted. In terms of biological role, may play a role in neural plasticity. May be involved during axon regeneration. This is Ependymin (epd) from Esox lucius (Northern pike).